The chain runs to 394 residues: Endothelial cell-selective adhesion molecule (394 aa).

The first 29 residues, 1 to 29, serve as a signal peptide directing secretion; the sequence is MILPARTPETSLLRVLFLGLSTLAAFSLA. Residues 30–251 are Extracellular-facing; the sequence is QMELHVPPGL…LDVMTGSKAA (222 aa). The Ig-like V-type domain occupies 37–146; it reads PGLNKLEAVE…DGKNIGHSIK (110 aa). N-linked (GlcNAc...) asparagine glycans are attached at residues Asn-111, Asn-172, Asn-216, and Asn-239. In terms of domain architecture, Ig-like C2-type spans 156–243; it reads PAPPSCSFQG…GFAQCNVTLD (88 aa). A disulfide bridge connects residues Cys-177 and Cys-227. Residues 252-272 traverse the membrane as a helical segment; it reads VVAGAVVGTFVGLVLIAGLVL. Residues 273-394 are Cytoplasmic-facing; sequence LYQRRSKTLE…PAQSQAGSLV (122 aa). A disordered region spans residues 300-372; that stretch reads WTKGSDTISK…SLTPGGVSSS (73 aa). Composition is skewed to polar residues over residues 303–318 and 335–347; these read GSDT…SVTS and FTPT…QALS. Ser-304 is modified (phosphoserine). 2 positions are modified to phosphothreonine: Thr-336 and Thr-338. Phosphoserine is present on residues Ser-340, Ser-343, and Ser-348.

As to quaternary structure, interacts with MAGI1.

Its subcellular location is the cell junction. It localises to the adherens junction. The protein resides in the tight junction. The protein localises to the cell membrane. Functionally, can mediate aggregation most likely through a homophilic molecular interaction. The protein is Endothelial cell-selective adhesion molecule (Esam) of Rattus norvegicus (Rat).